Reading from the N-terminus, the 488-residue chain is Phenylalanine--tRNA ligase alpha subunit (488 aa).

Residues Thr315, 354-356, Phe394, and Phe419 contribute to the L-phenylalanine site; that span reads QLD.

It belongs to the class-II aminoacyl-tRNA synthetase family. Phe-tRNA synthetase alpha subunit type 2 subfamily. As to quaternary structure, tetramer of two alpha and two beta subunits. The cofactor is Mg(2+).

It localises to the cytoplasm. It catalyses the reaction tRNA(Phe) + L-phenylalanine + ATP = L-phenylalanyl-tRNA(Phe) + AMP + diphosphate + H(+). This Pyrobaculum arsenaticum (strain DSM 13514 / JCM 11321 / PZ6) protein is Phenylalanine--tRNA ligase alpha subunit.